An 873-amino-acid polypeptide reads, in one-letter code: Calmodulin-dependent glutamylase SidJ (873 aa).

The interval 16 to 90 is disordered; the sequence is QSEDNPSETA…TTSTTKQKGP (75 aa). The span at 22 to 58 shows a compositional bias: polar residues; it reads SETAVETTDVSTKIKTTDTTQEESSVKTKTVVPTQPG. Asp542 and Asp545 together coordinate Mg(2+). The disordered stretch occupies residues 851 to 873; sequence NLSEKSDIDSEKPESERTTDKRL.

As to quaternary structure, interacts with host calmodulin/CALM1; this interaction is required for glutamylase activity. Mg(2+) is required as a cofactor.

The catalysed reaction is L-glutamyl-[protein] + L-glutamate + ATP = gamma-L-glutamyl-L-glutamyl-[protein] + ADP + phosphate + H(+). It catalyses the reaction (L-glutamyl)(n)-gamma-L-glutamyl-L-glutamyl-[protein] + L-glutamate + ATP = (L-glutamyl)(n+1)-gamma-L-glutamyl-L-glutamyl-[protein] + ADP + phosphate + H(+). Glytamylation catalyzed by SidJ requires host calmodulin and can be regulated by intracellular changes in Ca2+ concentrations. Also requires ATP. Its function is as follows. Glutamylase that mediates the covalent attachment of glutamate moieties to SdeA on one of the catalytic residues that is required for its mono-ADP-ribosyltransferase activity. In turn, inhibits SdeA ubiquitinating activity. Also glutamylates related SdeB, SdeC and SidE. Glutamylase activity only occurs in the host since it requires host calmodulin. May also reverse the SdeA-mediated substrate ubiquitination by cleaving the phosphodiester bond that links phosphoribosylated ubiquitin to protein substrates via its deubiquitinase activity. This Legionella pneumophila subsp. pneumophila (strain Philadelphia 1 / ATCC 33152 / DSM 7513) protein is Calmodulin-dependent glutamylase SidJ.